The chain runs to 397 residues: Elongation factor Tu (397 aa).

In terms of domain architecture, tr-type G spans 10-207 (LPHCNVGTIG…TLDSYIPQPE (198 aa)). A G1 region spans residues 19–26 (GHVDHGKT). GTP is bound at residue 19–26 (GHVDHGKT). Thr26 provides a ligand contact to Mg(2+). The interval 60-64 (GITIN) is G2. Positions 81 to 84 (DCPG) are G3. Residues 81–85 (DCPGH) and 136–139 (NKAD) each bind GTP. The tract at residues 136–139 (NKAD) is G4. Residues 174 to 176 (SAR) are G5.

The protein belongs to the TRAFAC class translation factor GTPase superfamily. Classic translation factor GTPase family. EF-Tu/EF-1A subfamily. Monomer.

It localises to the cytoplasm. The enzyme catalyses GTP + H2O = GDP + phosphate + H(+). GTP hydrolase that promotes the GTP-dependent binding of aminoacyl-tRNA to the A-site of ribosomes during protein biosynthesis. The chain is Elongation factor Tu from Pseudomonas syringae pv. tomato (strain ATCC BAA-871 / DC3000).